The sequence spans 302 residues: Aspartate carbamoyltransferase catalytic subunit (302 aa).

Positions 54 and 55 each coordinate carbamoyl phosphate. Lys82 is a binding site for L-aspartate. The carbamoyl phosphate site is built by Arg104, His132, and Gln135. Arg165 and Arg217 together coordinate L-aspartate. Carbamoyl phosphate is bound by residues Gly257 and Pro258.

Belongs to the aspartate/ornithine carbamoyltransferase superfamily. ATCase family. In terms of assembly, heterododecamer (2C3:3R2) of six catalytic PyrB chains organized as two trimers (C3), and six regulatory PyrI chains organized as three dimers (R2).

It carries out the reaction carbamoyl phosphate + L-aspartate = N-carbamoyl-L-aspartate + phosphate + H(+). The protein operates within pyrimidine metabolism; UMP biosynthesis via de novo pathway; (S)-dihydroorotate from bicarbonate: step 2/3. Its function is as follows. Catalyzes the condensation of carbamoyl phosphate and aspartate to form carbamoyl aspartate and inorganic phosphate, the committed step in the de novo pyrimidine nucleotide biosynthesis pathway. The polypeptide is Aspartate carbamoyltransferase catalytic subunit (Thermus thermophilus (strain ATCC BAA-163 / DSM 7039 / HB27)).